The primary structure comprises 172 residues: Protein-export protein SecB (172 aa).

The protein belongs to the SecB family. As to quaternary structure, homotetramer, a dimer of dimers. One homotetramer interacts with 1 SecA dimer.

The protein resides in the cytoplasm. Its function is as follows. One of the proteins required for the normal export of preproteins out of the cell cytoplasm. It is a molecular chaperone that binds to a subset of precursor proteins, maintaining them in a translocation-competent state. It also specifically binds to its receptor SecA. The sequence is that of Protein-export protein SecB from Ralstonia pickettii (strain 12J).